A 503-amino-acid polypeptide reads, in one-letter code: Probable cytosol aminopeptidase (503 aa).

Residues lysine 270 and aspartate 275 each contribute to the Mn(2+) site. Residue lysine 282 is part of the active site. Mn(2+) contacts are provided by aspartate 293, aspartate 352, and glutamate 354. The active site involves arginine 356.

The protein belongs to the peptidase M17 family. Mn(2+) is required as a cofactor.

The protein localises to the cytoplasm. The catalysed reaction is Release of an N-terminal amino acid, Xaa-|-Yaa-, in which Xaa is preferably Leu, but may be other amino acids including Pro although not Arg or Lys, and Yaa may be Pro. Amino acid amides and methyl esters are also readily hydrolyzed, but rates on arylamides are exceedingly low.. The enzyme catalyses Release of an N-terminal amino acid, preferentially leucine, but not glutamic or aspartic acids.. Its function is as follows. Presumably involved in the processing and regular turnover of intracellular proteins. Catalyzes the removal of unsubstituted N-terminal amino acids from various peptides. This is Probable cytosol aminopeptidase from Yersinia enterocolitica serotype O:8 / biotype 1B (strain NCTC 13174 / 8081).